A 349-amino-acid polypeptide reads, in one-letter code: tRNA pseudouridine synthase D (349 aa).

F27 contributes to the substrate binding site. The active-site Nucleophile is D80. N129 is a binding site for substrate. The 149-residue stretch at 155 to 303 (GVPNYFGAQR…VEAARRAMLL (149 aa)) folds into the TRUD domain. F329 is a binding site for substrate.

The protein belongs to the pseudouridine synthase TruD family.

It carries out the reaction uridine(13) in tRNA = pseudouridine(13) in tRNA. Responsible for synthesis of pseudouridine from uracil-13 in transfer RNAs. This is tRNA pseudouridine synthase D from Shigella flexneri.